The chain runs to 226 residues: PKHD-type hydroxylase mma_3620 (226 aa).

One can recognise a Fe2OG dioxygenase domain in the interval 78–178; it reads RYMPPLFNRY…RVCSFFWLQS (101 aa). 3 residues coordinate Fe cation: H96, D98, and H159. Residue R169 coordinates 2-oxoglutarate.

It depends on Fe(2+) as a cofactor. L-ascorbate serves as cofactor.

The protein is PKHD-type hydroxylase mma_3620 of Janthinobacterium sp. (strain Marseille) (Minibacterium massiliensis).